We begin with the raw amino-acid sequence, 307 residues long: Acetaldehyde dehydrogenase 1 (307 aa).

Cysteine 131 functions as the Acyl-thioester intermediate in the catalytic mechanism. NAD(+) contacts are provided by residues 162–170 (SIGPGTRKN) and asparagine 273.

The protein belongs to the acetaldehyde dehydrogenase family.

The catalysed reaction is acetaldehyde + NAD(+) + CoA = acetyl-CoA + NADH + H(+). In Metapseudomonas furukawaii (Pseudomonas furukawaii), this protein is Acetaldehyde dehydrogenase 1 (salG).